Reading from the N-terminus, the 310-residue chain is Vomeronasal type-1 receptor 97 (310 aa).

At 1-19 the chain is on the extracellular side; that stretch reads MNKDNILHTDTNIKITLFS. A helical transmembrane segment spans residues 20-40; it reads EVSIGISANSALFFSHLFMLF. At 41 to 49 the chain is on the cytoplasmic side; the sequence is EKNRSKPID. A helical membrane pass occupies residues 50-70; sequence LYIAFLSLTQLMLLITIGLIA. Residues 71-93 are Extracellular-facing; that stretch reads ADMFMSRGRWDSTTCQSLIYLHR. A disulfide bond links Cys85 and Cys172. Residues 94–114 form a helical membrane-spanning segment; sequence LLRGFTLCATCLLNVLWTITL. Topologically, residues 115–131 are cytoplasmic; it reads SPRSSCLTTFKHKSPHH. The chain crosses the membrane as a helical span at residues 132–152; it reads ISGAFLFFCVLYISFGSHLFL. The Extracellular portion of the chain corresponds to 153-190; it reads STIATPNLTSDNFMYVTQSCSFLPMSYSRTSMFSTPMA. N-linked (GlcNAc...) asparagine glycosylation occurs at Asn159. Residues 191 to 211 traverse the membrane as a helical segment; sequence IREALLIGLIGLSSGYMVAFL. The Cytoplasmic segment spans residues 212 to 238; the sequence is WRHKNQARHLHSTSLSSKVSPEQRATR. The chain crosses the membrane as a helical span at residues 239-259; sequence TIMILMSFFVVLYILENVVFY. Residues 260–269 lie on the Extracellular side of the membrane; sequence SRMTFKDGSM. A helical transmembrane segment spans residues 270–290; it reads FYCVQIIVSHSYATISPFVFI. The Cytoplasmic portion of the chain corresponds to 291–310; it reads CTEKRIIKLWGSMSSRIVSI.

This sequence belongs to the G-protein coupled receptor 1 family. In terms of tissue distribution, expressed in 1-4% of neurons of the vomeronasal organ. Only one pheromone receptor gene may be expressed in a particular neuron. Not expressed in the main olfactory epithelium.

It is found in the cell membrane. In terms of biological role, putative pheromone receptor implicated in the regulation of social as well as reproductive behavior. This Rattus norvegicus (Rat) protein is Vomeronasal type-1 receptor 97 (Vom1r97).